We begin with the raw amino-acid sequence, 493 residues long: Glutamate--tRNA ligase (493 aa).

A 'HIGH' region motif is present at residues 9–19 (PSPTGDPHVGT). The 'KMSKS' region motif lies at 249-253 (KLSKR). Lys-252 serves as a coordination point for ATP.

Belongs to the class-I aminoacyl-tRNA synthetase family. Glutamate--tRNA ligase type 1 subfamily. Monomer.

It is found in the cytoplasm. The enzyme catalyses tRNA(Glu) + L-glutamate + ATP = L-glutamyl-tRNA(Glu) + AMP + diphosphate. Functionally, catalyzes the attachment of glutamate to tRNA(Glu) in a two-step reaction: glutamate is first activated by ATP to form Glu-AMP and then transferred to the acceptor end of tRNA(Glu). This is Glutamate--tRNA ligase from Marinobacter nauticus (strain ATCC 700491 / DSM 11845 / VT8) (Marinobacter aquaeolei).